We begin with the raw amino-acid sequence, 474 residues long: Dihydrolipoyl dehydrogenase (474 aa).

Residues 36-45 (ERYNTLGGVC), K54, and G117 contribute to the FAD site. Residues C45 and C50 are joined by a disulfide bond. Residues 182 to 186 (GGGII) and E205 each bind NAD(+). K220 carries the post-translational modification N6-acetyllysine. NAD(+) is bound by residues V238 and 270 to 273 (AIGR). Positions 313 and 321 each coordinate FAD. H445 acts as the Proton acceptor in catalysis.

This sequence belongs to the class-I pyridine nucleotide-disulfide oxidoreductase family. As to quaternary structure, homodimer. The cofactor is FAD.

Its subcellular location is the cytoplasm. It catalyses the reaction N(6)-[(R)-dihydrolipoyl]-L-lysyl-[protein] + NAD(+) = N(6)-[(R)-lipoyl]-L-lysyl-[protein] + NADH + H(+). Its function is as follows. Lipoamide dehydrogenase is a component of the glycine cleavage system as well as of the alpha-ketoacid dehydrogenase complexes. This Shigella flexneri protein is Dihydrolipoyl dehydrogenase (lpdA).